Consider the following 280-residue polypeptide: NLP effector protein Pc553546 (280 aa).

The N-terminal stretch at 1-19 (MNLVAALVLCFALLSSVRG) is a signal peptide. The Hepta-peptide GHRHDWE motif signature appears at 123-129 (AGRHDWA). 2 N-linked (GlcNAc...) asparagine glycosylation sites follow: Asn-142 and Asn-209.

The protein belongs to the Necrosis inducing protein (NPP1) family.

It localises to the secreted. Its function is as follows. Secreted effector that contributes strongly to virulence during infection by P.capsici. This chain is NLP effector protein Pc553546, found in Phytophthora capsici.